Reading from the N-terminus, the 121-residue chain is Urotensin-2 (121 aa).

Residues 1–19 form the signal peptide; sequence MSKLVPCLLLLGCLGLLFA. Residues 20–106 constitute a propeptide that is removed on maturation; sequence LPVPDSRKEP…HLLARIKKPY (87 aa). Cys-115 and Cys-120 are disulfide-bonded.

It belongs to the urotensin-2 family.

It is found in the secreted. In terms of biological role, highly potent vasoconstrictor. The sequence is that of Urotensin-2 (UTS2) from Sus scrofa (Pig).